The sequence spans 449 residues: Trigger factor (449 aa).

The PPIase FKBP-type domain maps to 173 to 258; it reads GDRVTVDFVG…LKKVEWPHLP (86 aa).

Belongs to the FKBP-type PPIase family. Tig subfamily.

It localises to the cytoplasm. The catalysed reaction is [protein]-peptidylproline (omega=180) = [protein]-peptidylproline (omega=0). Involved in protein export. Acts as a chaperone by maintaining the newly synthesized protein in an open conformation. Functions as a peptidyl-prolyl cis-trans isomerase. This is Trigger factor from Burkholderia pseudomallei (strain 1710b).